Reading from the N-terminus, the 399-residue chain is Ankyrin repeat domain-containing protein 65 (399 aa).

ANK repeat units lie at residues 40–69, 73–102, 106–135, 139–168, 176–205, 207–231, 235–264, 268–297, 301–330, and 334–363; these read QGWG…SVEE, AGRT…PVGA, AGRT…SAAA, TGLT…PGPA, RGWT…GLDG, LLVA…RVDA, AGAT…DPGI, HGRS…EVDA, LGLT…QVDA, and LRKT…SPTL. Residues 377–399 form a disordered region; it reads DLPQALPELGGGEKECEGIESTG.

In Homo sapiens (Human), this protein is Ankyrin repeat domain-containing protein 65 (ANKRD65).